Reading from the N-terminus, the 292-residue chain is Acetylglutamate kinase (292 aa).

Substrate is bound by residues 64 to 65, R86, and N190; that span reads GG.

The protein belongs to the acetylglutamate kinase family. ArgB subfamily.

The protein resides in the cytoplasm. The enzyme catalyses N-acetyl-L-glutamate + ATP = N-acetyl-L-glutamyl 5-phosphate + ADP. It functions in the pathway amino-acid biosynthesis; L-arginine biosynthesis; N(2)-acetyl-L-ornithine from L-glutamate: step 2/4. Functionally, catalyzes the ATP-dependent phosphorylation of N-acetyl-L-glutamate. The polypeptide is Acetylglutamate kinase (Geotalea uraniireducens (strain Rf4) (Geobacter uraniireducens)).